The sequence spans 141 residues: Putative antiporter subunit mnhB2 (141 aa).

4 consecutive transmembrane segments (helical) span residues 10-30 (TVTKLVVFILLTFGFYVFFAG), 35-55 (GGGFIGGLIFSSAFILMFLAF), 70-90 (ILMIIGALVSSITAIMPTFFG), and 114-134 (ITLFELGILFSVVGVIVTVML).

This sequence belongs to the CPA3 antiporters (TC 2.A.63) subunit B family. May form a heterooligomeric complex that consists of seven subunits: mnhA2, mnhB2, mnhC2, mnhD2, mnhE2, mnhF2 and mnhG2.

Its subcellular location is the cell membrane. The chain is Putative antiporter subunit mnhB2 (mnhB2) from Staphylococcus aureus (strain MRSA252).